The sequence spans 441 residues: Xaa-Pro dipeptidase (441 aa).

5 residues coordinate Mn(2+): D244, D255, H336, E381, and E420.

Belongs to the peptidase M24B family. Bacterial-type prolidase subfamily. Requires Mn(2+) as cofactor.

The enzyme catalyses Xaa-L-Pro dipeptide + H2O = an L-alpha-amino acid + L-proline. Splits dipeptides with a prolyl residue in the C-terminal position. This Xanthomonas oryzae pv. oryzae (strain MAFF 311018) protein is Xaa-Pro dipeptidase.